The following is a 473-amino-acid chain: Photosystem II CP43 reaction center protein (473 aa).

The propeptide occupies 1-14; sequence MKTLYSLRRSYPVE. T15 bears the N-acetylthreonine mark. At T15 the chain carries Phosphothreonine. A run of 5 helical transmembrane segments spans residues 69–93, 134–155, 178–200, 255–275, and 291–312; these read LFEV…PHLA, LIGP…KDRN, KALY…RKIT, KPFA…LSYS, and WFNN…ASQA. [CaMn4O5] cluster is bound at residue E367. A helical membrane pass occupies residues 447 to 471; that stretch reads RARAAAAGFEKGIDRDFEPVLSMTP.

This sequence belongs to the PsbB/PsbC family. PsbC subfamily. As to quaternary structure, PSII is composed of 1 copy each of membrane proteins PsbA, PsbB, PsbC, PsbD, PsbE, PsbF, PsbH, PsbI, PsbJ, PsbK, PsbL, PsbM, PsbT, PsbX, PsbY, PsbZ, Psb30/Ycf12, at least 3 peripheral proteins of the oxygen-evolving complex and a large number of cofactors. It forms dimeric complexes. It depends on Binds multiple chlorophylls and provides some of the ligands for the Ca-4Mn-5O cluster of the oxygen-evolving complex. It may also provide a ligand for a Cl- that is required for oxygen evolution. PSII binds additional chlorophylls, carotenoids and specific lipids. as a cofactor.

It localises to the plastid. The protein localises to the chloroplast thylakoid membrane. Functionally, one of the components of the core complex of photosystem II (PSII). It binds chlorophyll and helps catalyze the primary light-induced photochemical processes of PSII. PSII is a light-driven water:plastoquinone oxidoreductase, using light energy to abstract electrons from H(2)O, generating O(2) and a proton gradient subsequently used for ATP formation. The protein is Photosystem II CP43 reaction center protein of Pinus thunbergii (Japanese black pine).